The primary structure comprises 806 residues: Facilitated trehalose transporter Tret1 (806 aa).

2 disordered regions span residues 1–34 (MFGN…TTGT) and 48–138 (LNST…HKNQ). At 1–339 (MFGNEMDDTR…LEVYRPTTNP (339 aa)) the chain is on the cytoplasmic side. Positions 25–34 (GSLSTSTTGT) are enriched in low complexity. The chain crosses the membrane as a helical span at residues 340–360 (IFIWTQVLAALSVSLGSMVVG). The Extracellular segment spans residues 361 to 389 (FSSAYTSPALVSMKDRNITSFEVTDQSGS). N-linked (GlcNAc...) asparagine glycosylation is present at Asn-377. The helical transmembrane segment at 390 to 410 (WVGGIMPLAGLAGGILGGPLI) threads the bilayer. The Cytoplasmic portion of the chain corresponds to 411–424 (EYLGRKNTILATAT). Residues 425 to 445 (PFIISWLLIACATHVAMVLVG) form a helical membrane-spanning segment. Residues 446 to 447 (RA) lie on the Extracellular side of the membrane. The helical transmembrane segment at 448–468 (LSGFSVGVASLSLPVYLGETV) threads the bilayer. Residues 469 to 473 (QPEVR) lie on the Cytoplasmic side of the membrane. A helical transmembrane segment spans residues 474-494 (GTLGLLPTAFGNIGILLCFVA). At 495–501 (GKYMDWS) the chain is on the extracellular side. Residues 502-522 (GLAFLGAALPIPFLLLMFLIP) traverse the membrane as a helical segment. The Cytoplasmic segment spans residues 523 to 585 (ETPRWYVSRG…DLMKKANLKP (63 aa)). The helical transmembrane segment at 586-606 (LLISLGLMFFQQLSGINAVIF) threads the bilayer. Over 607–622 (YTVQIFQDAGSTIDEN) the chain is Extracellular. The chain crosses the membrane as a helical span at residues 623 to 643 (LCTIIVGVVNFIATFIATMLI). Topologically, residues 644–649 (DRLGRK) are cytoplasmic. A helical transmembrane segment spans residues 650–670 (MLLYISDVAMIITLMTLGGFF). The Extracellular segment spans residues 671-681 (YVKNSGQDVSQ). A helical transmembrane segment spans residues 682-702 (VGWLPLAAFVIYVLGFSLGFG). The Cytoplasmic portion of the chain corresponds to 703–723 (PIPWLMMGEILPGKIRGSAAS). The chain crosses the membrane as a helical span at residues 724–744 (VATAFNWSCTFIVTKTFADII). The Extracellular portion of the chain corresponds to 745 to 750 (NAIGTH). The helical transmembrane segment at 751–771 (GTFWMFGSICVIGLAFVIFYV) threads the bilayer. Residues 772–806 (PETQGKSLEDIERKMMGRVRRMSSVANIKPLSFNM) lie on the Cytoplasmic side of the membrane.

This sequence belongs to the major facilitator superfamily. Sugar transporter (TC 2.A.1.1) family. Trehalose transporter subfamily.

The protein localises to the cell membrane. In terms of biological role, high-capacity facilitative transporter for trehalose. Does not transport maltose, sucrose or lactose. Mediates the bidirectional transfer of trehalose. Responsible for the transport of trehalose synthesized in the fat body and the incorporation of trehalose into other tissues that require a carbon source, thereby regulating trehalose levels in the hemolymph. This chain is Facilitated trehalose transporter Tret1, found in Aedes aegypti (Yellowfever mosquito).